A 393-amino-acid chain; its full sequence is Geranylgeranyl pyrophosphate synthase 2 (393 aa).

3 residues coordinate isopentenyl diphosphate: Lys-109, Arg-112, and His-141. Asp-148 and Asp-152 together coordinate Mg(2+). Arg-157 provides a ligand contact to dimethylallyl diphosphate. Arg-158 is a binding site for isopentenyl diphosphate. Positions 235, 236, and 275 each coordinate dimethylallyl diphosphate. Asp-278 serves as a coordination point for Mg(2+). The dimethylallyl diphosphate site is built by Asn-282, Lys-292, and Lys-302.

This sequence belongs to the FPP/GGPP synthase family. It depends on Mg(2+) as a cofactor.

The enzyme catalyses isopentenyl diphosphate + dimethylallyl diphosphate = (2E)-geranyl diphosphate + diphosphate. It carries out the reaction isopentenyl diphosphate + (2E)-geranyl diphosphate = (2E,6E)-farnesyl diphosphate + diphosphate. It catalyses the reaction isopentenyl diphosphate + (2E,6E)-farnesyl diphosphate = (2E,6E,10E)-geranylgeranyl diphosphate + diphosphate. The protein operates within plant hormone biosynthesis; gibberellin biosynthesis. Geranylgeranyl pyrophosphate synthase; part of the gene cluster that mediates the biosynthesis of gibberellins (GAs), diterpenoids that may provide a selective advantage during infection of the preferred host plant, rice. Gibberellins (GAs) are diterpenoids and are synthesized via the mevalonate pathway. Biosynthesis of the major metabolite GA3 (gibberellic acid) from geranylgeranyl diphosphate (GGPP) requires 13 steps. The GGPP produced by the geranylgeranyl diphosphate synthase GGS2 is converted to ent-kaurene via ent-copalyldiphosphate in a two-step cyclization reaction performed by the bifunctional ent-copalyl diphosphate synthase/ent-kaurene synthase enzyme (CPS/KS). Ent-Kaurene is metabolized to GAs by a series of oxidation reactions catalyzed by cytochrome P450 monooxygenases. Cytochrome P450 monooxygenase P450-4 is an ent-kaurene oxidase that catalyzes the three oxidation steps between ent-kaurene and ent-kaurenoic acid. The highly multifunctional cytochrome P450 monooxygenase P450-1 then catalyzes four steps involving oxidation at two carbon atoms, in the main pathway from ent-kaurenoic acid to GA14 via GA12-aldehyde as well as producing kaurenolides and fujenoic acids as by-products. The cytochrome P450 monooxygenase P450-2 then converts GA14 to GA4 by removal of C-20. GA4 is further converted to GA7 by the GA4 desaturase DES via 1,2-desaturation before cytochrome P450 monooxygenase P450-3, a 13-hydroxylase, hydroxylates GA7 to GA3, the final product of the GA-biosynthetic pathway. This is Geranylgeranyl pyrophosphate synthase 2 from Gibberella fujikuroi (strain CBS 195.34 / IMI 58289 / NRRL A-6831) (Bakanae and foot rot disease fungus).